The chain runs to 276 residues: Putative ankyrin repeat protein R838 (276 aa).

ANK repeat units lie at residues 134 to 163, 164 to 193, 195 to 223, and 225 to 253; these read DGDN…DPRS, DYDY…DISS, NHWP…DVRA, and NYNP…EIGS. Positions 254–276 are disordered; the sequence is VSDDDTYDSDSSDYSEDDSESIN. Residues 255–276 show a composition bias toward acidic residues; that stretch reads SDDDTYDSDSSDYSEDDSESIN.

This chain is Putative ankyrin repeat protein R838, found in Acanthamoeba polyphaga (Amoeba).